Consider the following 353-residue polypeptide: Phospho-N-acetylmuramoyl-pentapeptide-transferase (353 aa).

Transmembrane regions (helical) follow at residues 22-42 (FAFF…ITWA), 65-85 (TPTM…LSCI), 88-108 (DNIF…IGLI), 129-149 (LLTQ…SSEL), 161-181 (PLFD…ISSS), 192-212 (GLAT…LYLS), 228-248 (GLGE…GFLW), 256-276 (VFMG…LAII), 281-301 (ILLL…ILQV), and 330-350 (KIIV…LASI).

This sequence belongs to the glycosyltransferase 4 family. MraY subfamily. Mg(2+) is required as a cofactor.

Its subcellular location is the cell inner membrane. It catalyses the reaction UDP-N-acetyl-alpha-D-muramoyl-L-alanyl-gamma-D-glutamyl-meso-2,6-diaminopimeloyl-D-alanyl-D-alanine + di-trans,octa-cis-undecaprenyl phosphate = di-trans,octa-cis-undecaprenyl diphospho-N-acetyl-alpha-D-muramoyl-L-alanyl-D-glutamyl-meso-2,6-diaminopimeloyl-D-alanyl-D-alanine + UMP. Its pathway is cell wall biogenesis; peptidoglycan biosynthesis. Catalyzes the initial step of the lipid cycle reactions in the biosynthesis of the cell wall peptidoglycan: transfers peptidoglycan precursor phospho-MurNAc-pentapeptide from UDP-MurNAc-pentapeptide onto the lipid carrier undecaprenyl phosphate, yielding undecaprenyl-pyrophosphoryl-MurNAc-pentapeptide, known as lipid I. The protein is Phospho-N-acetylmuramoyl-pentapeptide-transferase of Campylobacter jejuni subsp. jejuni serotype O:23/36 (strain 81-176).